The primary structure comprises 616 residues: Chaperone protein HtpG (616 aa).

The interval 1-333 (MKKQFDTEVN…CQDLPLNVSR (333 aa)) is a; substrate-binding. A b region spans residues 334–542 (EILQQNKILS…SNDPTYQMQK (209 aa)). Positions 543-616 (IMLSMGQEVK…INEFLEKELL (74 aa)) are c.

This sequence belongs to the heat shock protein 90 family. As to quaternary structure, homodimer.

Its subcellular location is the cytoplasm. Functionally, molecular chaperone. Has ATPase activity. The polypeptide is Chaperone protein HtpG (Borrelia garinii subsp. bavariensis (strain ATCC BAA-2496 / DSM 23469 / PBi) (Borreliella bavariensis)).